A 327-amino-acid polypeptide reads, in one-letter code: 2-methoxy-6-polyprenyl-1,4-benzoquinol methylase, mitochondrial (327 aa).

The N-terminal 49 residues, 1–49, are a transit peptide targeting the mitochondrion; it reads MAAPRSCVLWSYCGHGWSRLAGDCRLPGFRRSWLGATLSARSLSQEKRA. Residues Thr117, Asp171, and 199–200 contribute to the S-adenosyl-L-methionine site; that span reads DA.

It belongs to the class I-like SAM-binding methyltransferase superfamily. MenG/UbiE family. In terms of assembly, component of a multi-subunit COQ enzyme complex, composed of at least COQ3, COQ4, COQ5, COQ6, COQ7 and COQ9. Interacts with PYURF; the interaction is direct, stabilizes COQ5 protein and associates PYURF with COQ enzyme complex.

It localises to the mitochondrion inner membrane. The enzyme catalyses 2-methoxy-6-(all-trans-decaprenyl)benzene-1,4-diol + S-adenosyl-L-methionine = 5-methoxy-2-methyl-3-(all-trans-decaprenyl)benzene-1,4-diol + S-adenosyl-L-homocysteine + H(+). The protein operates within cofactor biosynthesis; ubiquinone biosynthesis. Methyltransferase required for the conversion of 2-decaprenyl-6-methoxy-1,4-benzoquinol (DDMQH2) to 2-decaprenyl-3-methyl-6-methoxy-1,4-benzoquinol (DMQH2). The polypeptide is 2-methoxy-6-polyprenyl-1,4-benzoquinol methylase, mitochondrial (Rattus norvegicus (Rat)).